The sequence spans 602 residues: UvrABC system protein C (602 aa).

One can recognise a GIY-YIG domain in the interval 15–92 (DLPGSYQMKD…IQKYQPYYNI (78 aa)). A UVR domain is found at 197 to 232 (GKAKASLTAKMERAAKNLQFERAAEIRDQLHYIEQT).

The protein belongs to the UvrC family. In terms of assembly, interacts with UvrB in an incision complex.

Its subcellular location is the cytoplasm. In terms of biological role, the UvrABC repair system catalyzes the recognition and processing of DNA lesions. UvrC both incises the 5' and 3' sides of the lesion. The N-terminal half is responsible for the 3' incision and the C-terminal half is responsible for the 5' incision. The polypeptide is UvrABC system protein C (Lacticaseibacillus casei (strain BL23) (Lactobacillus casei)).